Reading from the N-terminus, the 126-residue chain is Anti-adapter protein IraD (126 aa).

This sequence belongs to the GpW/Gp25 family. IraD subfamily. In terms of assembly, interacts with RssB.

It localises to the cytoplasm. In terms of biological role, inhibits RpoS proteolysis by regulating RssB activity, thereby increasing the stability of the sigma stress factor RpoS during oxidative stress. Its effect on RpoS stability is due to its interaction with RssB, which probably blocks the interaction of RssB with RpoS, and the consequent delivery of the RssB-RpoS complex to the ClpXP protein degradation pathway. The protein is Anti-adapter protein IraD of Salmonella paratyphi A (strain ATCC 9150 / SARB42).